The chain runs to 309 residues: Porphobilinogen deaminase (309 aa).

Cys-242 is subject to S-(dipyrrolylmethanemethyl)cysteine.

The protein belongs to the HMBS family. In terms of assembly, monomer. It depends on dipyrromethane as a cofactor.

The catalysed reaction is 4 porphobilinogen + H2O = hydroxymethylbilane + 4 NH4(+). The protein operates within porphyrin-containing compound metabolism; protoporphyrin-IX biosynthesis; coproporphyrinogen-III from 5-aminolevulinate: step 2/4. Functionally, tetrapolymerization of the monopyrrole PBG into the hydroxymethylbilane pre-uroporphyrinogen in several discrete steps. This Shewanella frigidimarina (strain NCIMB 400) protein is Porphobilinogen deaminase.